Consider the following 355-residue polypeptide: MSGQGKRLMVMAGGTGGHVFPGLAVAHHLMAQGWQVRWLGTADRMEADLVPKHGIEIDFIRISGLRGKGIKALIAAPLRIFNAWRQARAIMKAYKPDVVLGMGGYVSGPGGLAAWSLGIPVVLHEQNGIAGLTNKWLAKIATKVMQAFPGAFPNAEVVGNPVRTDVLALSLPQQRLAGREGPVRVLVVGGSQGARILNQTMPQVAAKLGDSVTIWHQSGKGSQQSVEQAYAEAGQPQHKVTEFIDDMAAAYAWADVVVCRSGALTVSEIAAAGLPALFVPFQHKDRQQYWNALPLEKAGAAKIIEQPQLSVDAVANTLAGWSRETLLTMAERARAASIPDATERVANEVSRVARA.

UDP-N-acetyl-alpha-D-glucosamine is bound by residues threonine 15–glycine 17, asparagine 127, arginine 163, serine 191, isoleucine 244, alanine 263–glutamate 268, and glutamine 288.

It belongs to the glycosyltransferase 28 family. MurG subfamily.

The protein resides in the cell inner membrane. The enzyme catalyses di-trans,octa-cis-undecaprenyl diphospho-N-acetyl-alpha-D-muramoyl-L-alanyl-D-glutamyl-meso-2,6-diaminopimeloyl-D-alanyl-D-alanine + UDP-N-acetyl-alpha-D-glucosamine = di-trans,octa-cis-undecaprenyl diphospho-[N-acetyl-alpha-D-glucosaminyl-(1-&gt;4)]-N-acetyl-alpha-D-muramoyl-L-alanyl-D-glutamyl-meso-2,6-diaminopimeloyl-D-alanyl-D-alanine + UDP + H(+). It participates in cell wall biogenesis; peptidoglycan biosynthesis. Functionally, cell wall formation. Catalyzes the transfer of a GlcNAc subunit on undecaprenyl-pyrophosphoryl-MurNAc-pentapeptide (lipid intermediate I) to form undecaprenyl-pyrophosphoryl-MurNAc-(pentapeptide)GlcNAc (lipid intermediate II). The polypeptide is UDP-N-acetylglucosamine--N-acetylmuramyl-(pentapeptide) pyrophosphoryl-undecaprenol N-acetylglucosamine transferase (Escherichia coli O9:H4 (strain HS)).